Here is a 142-residue protein sequence, read N- to C-terminus: Phosphoribosyl-AMP cyclohydrolase (142 aa).

A Mg(2+)-binding site is contributed by Asp92. Cys93 is a binding site for Zn(2+). 2 residues coordinate Mg(2+): Asp94 and Asp96. Zn(2+)-binding residues include Cys109 and Cys116.

It belongs to the PRA-CH family. In terms of assembly, homodimer. Mg(2+) serves as cofactor. Requires Zn(2+) as cofactor.

The protein resides in the cytoplasm. The enzyme catalyses 1-(5-phospho-beta-D-ribosyl)-5'-AMP + H2O = 1-(5-phospho-beta-D-ribosyl)-5-[(5-phospho-beta-D-ribosylamino)methylideneamino]imidazole-4-carboxamide. It participates in amino-acid biosynthesis; L-histidine biosynthesis; L-histidine from 5-phospho-alpha-D-ribose 1-diphosphate: step 3/9. Its function is as follows. Catalyzes the hydrolysis of the adenine ring of phosphoribosyl-AMP. In Alkalilimnicola ehrlichii (strain ATCC BAA-1101 / DSM 17681 / MLHE-1), this protein is Phosphoribosyl-AMP cyclohydrolase.